The sequence spans 364 residues: Inactive protein RESTRICTED TEV MOVEMENT 2 (364 aa).

In terms of domain architecture, sHSP spans 14 to 121 (VQYEDFVPKS…LPETSRTEAA (108 aa)). One copy of the A-1 repeat lies at 129–133 (LEEKR). The 6 X 5 AA repeats A of L-E-E-[SKR]-[ERK] stretch occupies residues 129–220 (LEEKRLLEES…LEERRLEERK (92 aa)). An A-2 repeat occupies 135–139 (LEESR). The A-3 repeat unit spans residues 156–160 (LEEKE). Residues 163 to 176 (IRKLQEEAKAKEEA) form a B-1 repeat. Residues 163 to 206 (IRKLQEEAKAKEEAEMRKLQEEAKAKEEAAAKKLQEEIEAKEKL) form a 3 X 14 AA repeats B of [IMA]-[RK]-K-L-Q-E-E-A-K-A-K-E-[EK]-[LA] region. One copy of the B-2 repeat lies at 178-191 (MRKLQEEAKAKEEA). Residues 193–205 (AKKLQEEIEAKEK) form a B-3 repeat. An A-4 repeat occupies 206–210 (LEERK). The A-5 repeat unit spans residues 211–215 (LEERR). Residues 216–220 (LEERK) form an A-6 repeat. A helical transmembrane segment spans residues 322-342 (LMMNVGVAALVIFALGAYVSY). A disordered region spans residues 345 to 364 (CSSSSSSSSPSSSSSSTKPE). Over residues 346 to 364 (SSSSSSSSPSSSSSSTKPE) the composition is skewed to low complexity.

This sequence belongs to the small heat shock protein (HSP20) family.

The protein resides in the cell membrane. Functionally, seems to not be involved in heat resistance. Unable to mediate restriction of long-distance movement of the pathogenic tobacco etch virus (TEV) without causing a hypersensitive response or inducing systemic acquired resistance. This is Inactive protein RESTRICTED TEV MOVEMENT 2 (RTM2) from Arabidopsis thaliana (Mouse-ear cress).